A 136-amino-acid polypeptide reads, in one-letter code: Interleukin-13 (136 aa).

Positions 1–18 (MALWLTVVIAFTCIGGLA) are cleaved as a signal peptide. 6 N-linked (GlcNAc...) asparagine glycosylation sites follow: asparagine 38, asparagine 49, asparagine 57, asparagine 72, asparagine 75, and asparagine 131. Cystine bridges form between cysteine 48-cysteine 76 and cysteine 64-cysteine 90.

Belongs to the IL-4/IL-13 family. As to quaternary structure, interacts with IL13RA2.

The protein localises to the secreted. Cytokine that plays important roles in allergic inflammation and immune response to parasite infection. Synergizes with IL2 in regulating interferon-gamma synthesis. Stimulates B-cell proliferation, and activation of eosinophils, basophils, and mast cells. Plays an important role in controlling IL33 activity by modulating the production of transmembrane and soluble forms of interleukin-1 receptor-like 1/IL1RL1. Displays the capacity to antagonize Th1-driven proinflammatory immune response and downregulates synthesis of many proinflammatory cytokines including IL1, IL6, IL10, IL12 and TNF-alpha through a mechanism that partially involves suppression of NF-kappa-B. Also functions on nonhematopoietic cells, including endothelial cells where it induces vascular cell adhesion protein 1/VCAM1, which is important in the recruitment of eosinophils. Exerts its biological effects through its receptors which comprises the IL4R chain and the IL13RA1 chain, to activate JAK1 and TYK2, leading to the activation of STAT6. Aside from IL13RA1, another receptor IL13RA2 acts as a high affinity decoy for IL13 and mediates internalization and depletion of extracellular IL13. The sequence is that of Interleukin-13 (IL13) from Camelus bactrianus (Bactrian camel).